The primary structure comprises 892 residues: DNA mismatch repair protein MutS (892 aa).

607–614 contributes to the ATP binding site; sequence GPNMSGKS. The segment at 833–855 is disordered; it reads EESQLSFFGAEQSSKKQDKPALD. Residues 845 to 855 are compositionally biased toward basic and acidic residues; the sequence is SSKKQDKPALD.

This sequence belongs to the DNA mismatch repair MutS family.

This protein is involved in the repair of mismatches in DNA. It is possible that it carries out the mismatch recognition step. This protein has a weak ATPase activity. The sequence is that of DNA mismatch repair protein MutS from Bacillus anthracis (strain A0248).